The following is a 223-amino-acid chain: DNA mismatch repair protein MutH (223 aa).

The protein belongs to the MutH family.

The protein resides in the cytoplasm. In terms of biological role, sequence-specific endonuclease that cleaves unmethylated GATC sequences. It is involved in DNA mismatch repair. In Haemophilus influenzae (strain ATCC 51907 / DSM 11121 / KW20 / Rd), this protein is DNA mismatch repair protein MutH.